Consider the following 1969-residue polypeptide: Hybrid signal transduction histidine kinase B (1969 aa).

Over residues 1–10 (MEKSEQTNSF) the composition is skewed to polar residues. Disordered stretches follow at residues 1–91 (MEKS…HETK), 218–335 (KINE…KTKQ), 412–436 (QQQQ…SSDK), 468–505 (NNIN…KNKL), and 551–598 (GSGG…YNNN). Positions 11-55 (ESSNNNNNNIDSNINNNLENNNNKNNNNNNNNNNNNNNNNNNIEN) are enriched in low complexity. Residues 56–65 (SIDKNNKEDN) show a composition bias toward basic and acidic residues. Basic residues predominate over residues 72–86 (SHRKHRTRLKSKKGN). Over residues 242–252 (TNSSILKSSEQ) the composition is skewed to polar residues. The segment covering 280–292 (SSSSDEGSDNSKS) has biased composition (low complexity). A compositionally biased stretch (polar residues) spans 293-304 (QHSSVNTPTLSR). The span at 313-335 (SQQSQKQSQQQSQQPQQQNKTKQ) shows a compositional bias: low complexity. Basic residues predominate over residues 416-425 (QHHRHYHHHI). Polar residues predominate over residues 469-492 (NINIQAPSTPVQSRNYPLFTTQSP). Over residues 551–571 (GSGGGGSGGGGGGGGGGGGIG) the composition is skewed to gly residues. A compositionally biased stretch (low complexity) spans 574-598 (SSFLDDNNNLNNGENFKNSNSYNNN). Transmembrane regions (helical) follow at residues 660-680 (AYIL…STIL), 684-704 (EWFI…LGKI), 708-728 (MYLI…TSII), 747-767 (LVMI…VILI), and 795-815 (FGEL…YTIL). In terms of domain architecture, Histidine kinase spans 967-1188 (TVSHELRTPI…TFSFTIPCGI (222 aa)). His-970 bears the Phosphohistidine; by autocatalysis mark. Disordered regions lie at residues 1359–1415 (ASKD…HQLI), 1521–1563 (GIAL…TTQS), 1617–1709 (NNNF…SSHS), and 1755–1832 (QKPQ…TAAA). Residues 1373 to 1398 (GDGGRSLSGGGGGVGSNGNGNGGGGL) are compositionally biased toward gly residues. Composition is skewed to low complexity over residues 1399 to 1410 (DSNISPSELSSS) and 1527 to 1549 (SSSK…SPNS). 2 stretches are compositionally biased toward polar residues: residues 1554–1563 (ELGNGKTTQS) and 1626–1665 (KPST…SPHR). Composition is skewed to low complexity over residues 1755-1774 (QKPQ…TSTQ) and 1781-1821 (KTTT…TTTT). The Response regulatory domain maps to 1840–1967 (KILLVEDNFV…DILIQMIKKH (128 aa)). Asp-1889 is subject to 4-aspartylphosphate.

The protein resides in the membrane. It catalyses the reaction ATP + protein L-histidine = ADP + protein N-phospho-L-histidine.. Its function is as follows. Acts in the cytokinin signal transduction pathway that regulates spore germination. Required for the maintenance of spore dormancy. Does not appear to act as a cytokinin receptor. Probably undergoes ATP-dependent autophosphorylation at a conserved histidine residue in the kinase core, which is followed by transfer of the phosphoryl group to a conserved aspartate residue in the receiver domain. This is Hybrid signal transduction histidine kinase B (dhkB) from Dictyostelium discoideum (Social amoeba).